The primary structure comprises 268 residues: MTLLNVCGLSHHYAHGGFSGKHQHQAVLNNVSLTLKSGETVALLGRSGCGKSTLARLLVGLESPSQGNISWRGESLAKLNRAQRKAFRRDIQMVFQDSISAVNPRKTVREILREPMRHLLSLKKSEQLARASEMLKAVDLDDSVLDKRPPQLSGGQLQLVCLARALAVEPKLLILDEAVSNLDLVLQAGVIRLLKKLQQQFGTACLFITHDLRLVERFCQRVMVMDNGQIAETQAVGDKLTFSSDAGRVLQNAVLPAFPVRRRTSEKV.

Residues 4–252 (LNVCGLSHHY…SSDAGRVLQN (249 aa)) form the ABC transporter domain. Position 45–52 (45–52 (GRSGCGKS)) interacts with ATP.

Belongs to the ABC transporter superfamily. Nickel importer (TC 3.A.1.5.3) family. The complex is composed of two ATP-binding proteins (NikD and NikE), two transmembrane proteins (NikB and NikC) and a solute-binding protein (NikA).

The protein resides in the cell inner membrane. The enzyme catalyses Ni(2+)(out) + ATP + H2O = Ni(2+)(in) + ADP + phosphate + H(+). Functionally, part of the ABC transporter complex NikABCDE involved in nickel import. Responsible for energy coupling to the transport system. The polypeptide is Nickel import ATP-binding protein NikE (Shigella flexneri serotype 5b (strain 8401)).